The primary structure comprises 366 residues: Histidinol-phosphate aminotransferase 2 (366 aa).

Residue K226 is modified to N6-(pyridoxal phosphate)lysine.

This sequence belongs to the class-II pyridoxal-phosphate-dependent aminotransferase family. Histidinol-phosphate aminotransferase subfamily. Homodimer. Pyridoxal 5'-phosphate is required as a cofactor.

The enzyme catalyses L-histidinol phosphate + 2-oxoglutarate = 3-(imidazol-4-yl)-2-oxopropyl phosphate + L-glutamate. It functions in the pathway amino-acid biosynthesis; L-histidine biosynthesis; L-histidine from 5-phospho-alpha-D-ribose 1-diphosphate: step 7/9. The chain is Histidinol-phosphate aminotransferase 2 from Haemophilus influenzae (strain 86-028NP).